The chain runs to 525 residues: Biotinidase (525 aa).

The N-terminal stretch at 1–26 is a signal peptide; the sequence is MSRAGRQLALLLCSCCVAVAIPGGLA. The CN hydrolase domain occupies 54 to 333; it reads DPLALTSREQ…PGLISAGNAT (280 aa). E94 serves as the catalytic Proton acceptor. N-linked (GlcNAc...) asparagine glycosylation is found at N132 and N185. The Proton donor role is filled by K194. The active-site Nucleophile is C227. N384 is a glycosylation site (N-linked (GlcNAc...) asparagine).

It belongs to the carbon-nitrogen hydrolase superfamily. BTD/VNN family.

The protein resides in the secreted. Its subcellular location is the extracellular space. It carries out the reaction biocytin + H2O = biotin + L-lysine. The enzyme catalyses biotin amide + H2O = biotin + NH4(+). Functionally, catalytic release of biotin from biocytin, the product of biotin-dependent carboxylases degradation. This is Biotinidase (BTD) from Bos taurus (Bovine).